A 183-amino-acid polypeptide reads, in one-letter code: Adenine phosphoribosyltransferase (183 aa).

Belongs to the purine/pyrimidine phosphoribosyltransferase family. In terms of assembly, homodimer.

It localises to the cytoplasm. It carries out the reaction AMP + diphosphate = 5-phospho-alpha-D-ribose 1-diphosphate + adenine. It functions in the pathway purine metabolism; AMP biosynthesis via salvage pathway; AMP from adenine: step 1/1. In terms of biological role, catalyzes a salvage reaction resulting in the formation of AMP, that is energically less costly than de novo synthesis. This is Adenine phosphoribosyltransferase from Edwardsiella ictaluri (strain 93-146).